Consider the following 222-residue polypeptide: Interleukin-12 subunit alpha (222 aa).

Positions 1–25 (MCPPRGLLLVTILVLLSHLDHLTWA) are cleaved as a signal peptide. 3 disulfide bridges follow: C40–C113, C67–C199, and C88–C126. N-linked (GlcNAc...) asparagine glycosylation is found at N42, N96, and N110.

Belongs to the IL-6 superfamily. Heterodimer with IL12B; disulfide-linked. This heterodimer is known as interleukin IL-12. Heterodimer with EBI3/IL27B; not disulfide-linked. This heterodimer is known as interleukin IL-35. Interacts with NBR1; this interaction promotes IL-12 secretion.

It localises to the secreted. Functionally, heterodimerizes with IL12B to form the IL-12 cytokine or with EBI3/IL27B to form the IL-35 cytokine. IL-12 is primarily produced by professional antigen-presenting cells (APCs) such as B-cells and dendritic cells (DCs) as well as macrophages and granulocytes and regulates T-cell and natural killer-cell responses, induces the production of interferon-gamma (IFN-gamma), favors the differentiation of T-helper 1 (Th1) cells and is an important link between innate resistance and adaptive immunity. Mechanistically, exerts its biological effects through a receptor composed of IL12R1 and IL12R2 subunits. Binding to the receptor results in the rapid tyrosine phosphorylation of a number of cellular substrates including the JAK family kinases TYK2 and JAK2. In turn, recruited STAT4 gets phosphorylated and translocates to the nucleus where it regulates cytokine/growth factor responsive genes. As part of IL-35, plays essential roles in maintaining the immune homeostasis of the liver microenvironment and also functions as an immune-suppressive cytokine. Mediates biological events through unconventional receptors composed of IL12RB2 and gp130/IL6ST heterodimers or homodimers. Signaling requires the transcription factors STAT1 and STAT4, which form a unique heterodimer that binds to distinct DNA sites. This is Interleukin-12 subunit alpha (IL12A) from Canis lupus familiaris (Dog).